A 123-amino-acid polypeptide reads, in one-letter code: Small ribosomal subunit protein uS12 (123 aa).

3-methylthioaspartic acid is present on aspartate 89.

Belongs to the universal ribosomal protein uS12 family. Part of the 30S ribosomal subunit. Contacts proteins S8 and S17. May interact with IF1 in the 30S initiation complex.

With S4 and S5 plays an important role in translational accuracy. In terms of biological role, interacts with and stabilizes bases of the 16S rRNA that are involved in tRNA selection in the A site and with the mRNA backbone. Located at the interface of the 30S and 50S subunits, it traverses the body of the 30S subunit contacting proteins on the other side and probably holding the rRNA structure together. The combined cluster of proteins S8, S12 and S17 appears to hold together the shoulder and platform of the 30S subunit. The protein is Small ribosomal subunit protein uS12 of Syntrophobacter fumaroxidans (strain DSM 10017 / MPOB).